Reading from the N-terminus, the 1060-residue chain is DNA-directed RNA polymerase subunit beta (1060 aa).

The protein belongs to the RNA polymerase beta chain family. In terms of assembly, in plastids the minimal PEP RNA polymerase catalytic core is composed of four subunits: alpha, beta, beta', and beta''. When a (nuclear-encoded) sigma factor is associated with the core the holoenzyme is formed, which can initiate transcription.

It localises to the plastid. It is found in the chloroplast. It carries out the reaction RNA(n) + a ribonucleoside 5'-triphosphate = RNA(n+1) + diphosphate. Its function is as follows. DNA-dependent RNA polymerase catalyzes the transcription of DNA into RNA using the four ribonucleoside triphosphates as substrates. This Helianthus annuus (Common sunflower) protein is DNA-directed RNA polymerase subunit beta.